Here is a 415-residue protein sequence, read N- to C-terminus: Dynein assembly factor with WD repeat domains 1 (415 aa).

WD repeat units lie at residues 90 to 129 (AHIL…ELHT), 132 to 172 (GHRN…CFYT), 175 to 214 (GHTA…EVST), 217 to 256 (GHFA…KVHV), 259 to 298 (GHRG…CLAT), 301 to 340 (GHND…CLCQ), 343 to 384 (GHKG…QVLE), and 385 to 415 (GHSD…RIWH).

This sequence belongs to the WD repeat WDR69 family. In terms of tissue distribution, expressed in organs bearing motile cilia, including the pronephros, otic vesicles and Kupffer's vesicle.

It localises to the cytoplasm. It is found in the cytoskeleton. The protein resides in the flagellum basal body. Its subcellular location is the flagellum axoneme. In terms of biological role, required for axonemal dynein assembly and ciliary motility in ciliated organs, including Kupffer's vesicle, during embryogenesis. Facilitates the onset of robust cilia motility during development. The sequence is that of Dynein assembly factor with WD repeat domains 1 (daw1) from Danio rerio (Zebrafish).